We begin with the raw amino-acid sequence, 344 residues long: Ferrochelatase (344 aa).

Residues His-191 and Glu-271 each coordinate Fe cation.

Belongs to the ferrochelatase family.

It localises to the cytoplasm. It catalyses the reaction heme b + 2 H(+) = protoporphyrin IX + Fe(2+). It functions in the pathway porphyrin-containing compound metabolism; protoheme biosynthesis; protoheme from protoporphyrin-IX: step 1/1. Its function is as follows. Catalyzes the ferrous insertion into protoporphyrin IX. The protein is Ferrochelatase of Pelagibacter ubique (strain HTCC1062).